A 372-amino-acid chain; its full sequence is uncharacterized protein (372 aa).

The interval 328–353 (KKGQPCKDEDAVTVPLPSSDPGKETQ) is disordered.

Functionally, induces the SOS system when expressed in E.coli, therefore, it may play a role in DNA metabolism and/or in genome stability. This is an uncharacterized protein from Saccharomyces cerevisiae (strain ATCC 204508 / S288c) (Baker's yeast).